The chain runs to 146 residues: Ribonuclease VapC41 (146 aa).

The PINc domain maps to 3 to 142; the sequence is LCDTNIWLAL…FTQYGGIELR (140 aa). Mg(2+) contacts are provided by Asp5 and Asp112.

It belongs to the PINc/VapC protein family. Mg(2+) serves as cofactor.

Functionally, toxic component of a type II toxin-antitoxin (TA) system. An RNase. Its toxic effect is neutralized by coexpression with cognate antitoxin VapB41. This Mycobacterium tuberculosis (strain CDC 1551 / Oshkosh) protein is Ribonuclease VapC41.